Reading from the N-terminus, the 556-residue chain is MSSASSDSNTGSLTIAGSGIASVRHMTLETLAHVQEADIVFYVVADPVTEAYIKKNARGPCKDLEVLFDKDKVRYDTYVQMAETMLNAVREGQKVLGIFYGHPGVFVSPSRRALSIARKEGYQAKMLPGISSEDYMFADLEFDPAVHGCCAYEATQLLLREVSLDTAMSNIIWQVGGVGVSKIDFENSKVKLLVDRLEKDFGPDHHVVHYIGAVLPQSATVQDVLKISDLRKEEIVAQFNSCSTLYVPPLTHANKFSGNMVKQLFGQDVTEVSSALCPTPKWAAGSHLGDVVEYGPREKAAVDALVEHTVPADYRVLGGSLAFQQFMIDLALRPAIQANYKENPRALVDATKGLTTVEQAALLLRQPGAVFGVMKLRASEVANEQGHPVAPASLDHVAFTAPSPASLDHVAFSAPNPASLDHVAFIAPTPASLDHVAFSAPTPASLDHVSFGTPTSASLDHVAFEAPVPASLDHVAFAAPVPASLDHVAFAAPTPASLDHVAFAAPTPASLDHVAFAVPVPASLDHIAFSVPTPASLDHVAFAVPVPDHVAGIPCM.

The segment at Met1–Leu250 is methyltransferase domain. Residues Arg74, Tyr78, and Tyr100 contribute to the active site. Positions 100, 102, 105, 174, 212, 243, and 244 each coordinate S-adenosyl-L-methionine. Residues Thr251–Arg377 form a clasp domain region. The interval Ala378–Gly386 is precursor leader. Residues Asp421, Asp434, Asp447, Asp460, Asp473, Asp486, Asp499, Asp512, Asp525, and Asp538 each carry the N-methylaspartate modification. A propeptide spanning residues Ala543–Met556 is cleaved from the precursor.

In the N-terminal section; belongs to the precorrin methyltransferase family. In terms of assembly, homodimer. PgiMA1 automethylates at Asp-421, Asp-434, Asp-447, Asp-460, Asp-473, Asp-486, Asp-499, Asp-512, Asp-525 and Asp-538 before being processed, probably by the M64 family peptidase found in the genes surrounding PgiMA1, to release methylated peptides which then undergos macrocyclization with the N-terminus of the modified core peptides. Peptide backbone alpha-N-methylations change the physicochemical properties of amide bonds to provide structural constraints and other favorable characteristics including biological membrane permeability to peptides.

It functions in the pathway secondary metabolite biosynthesis. Its function is as follows. Fusion protein of the methyltransferase pgiM1 and 12 type II borosin core peptides; part of the gene cluster that mediates the biosynthesis of a type II borosin, a highly methylated cyclic peptide with potent biological activities. Type II borosins derive from the C-terminus of the fusion protein, and it is the same protein that methylates its own C-terminus using S-adenosyl methionine (SAM). The C-terminus is subsequently cleaved off and macrocyclized by a prolyloligopeptidase to give the final product. This chain is Methyltransferase/ribosomally synthesized type II borosin cyclic peptide precursor pgiMA1, found in Phlebiopsis gigantea (strain 11061_1 CR5-6) (White-rot fungus).